Reading from the N-terminus, the 493-residue chain is Alpha-amylase-related protein (493 aa).

A signal peptide spans 1 to 19; sequence MFKFATAVILCLAASSTLA. Glutamine 20 bears the Pyrrolidone carboxylic acid mark. An intrachain disulfide couples cysteine 47 to cysteine 103. The Ca(2+) site is built by asparagine 117, glutamine 168, and aspartate 177. Cysteines 156 and 170 form a disulfide. Position 205 (arginine 205) interacts with chloride. Residue aspartate 207 is the Nucleophile of the active site. Histidine 211 contributes to the Ca(2+) binding site. Glutamate 244 functions as the Proton donor in the catalytic mechanism. Chloride-binding residues include asparagine 307 and arginine 342. 3 cysteine pairs are disulfide-bonded: cysteine 375-cysteine 381, cysteine 417-cysteine 440, and cysteine 447-cysteine 459.

This sequence belongs to the glycosyl hydrolase 13 family. In terms of assembly, monomer. It depends on Ca(2+) as a cofactor. The cofactor is chloride.

The protein resides in the secreted. The catalysed reaction is Endohydrolysis of (1-&gt;4)-alpha-D-glucosidic linkages in polysaccharides containing three or more (1-&gt;4)-alpha-linked D-glucose units.. The protein is Alpha-amylase-related protein (Amyrel) of Drosophila ananassae (Fruit fly).